A 190-amino-acid polypeptide reads, in one-letter code: Guanylate kinase (190 aa).

Residues 8 to 188 (GRLVILAGPS…AVSAIKAVLL (181 aa)) enclose the Guanylate kinase-like domain. 15 to 22 (GPSAVGKS) is an ATP binding site.

The protein belongs to the guanylate kinase family.

It is found in the cytoplasm. The enzyme catalyses GMP + ATP = GDP + ADP. In terms of biological role, essential for recycling GMP and indirectly, cGMP. The polypeptide is Guanylate kinase (Corynebacterium efficiens (strain DSM 44549 / YS-314 / AJ 12310 / JCM 11189 / NBRC 100395)).